A 255-amino-acid polypeptide reads, in one-letter code: Protein C activator (255 aa).

The N-terminal stretch at M1–A18 is a signal peptide. Positions Q19–L24 are excised as a propeptide. The Peptidase S1 domain occupies V25–S246. 6 disulfides stabilise this stretch: C31/C162, C49/C65, C97/C253, C141/C207, C173/C186, and C197/C222. An N-linked (GlcNAc...) asparagine glycan is attached at N45. H64 serves as the catalytic Charge relay system. N102 carries an N-linked (GlcNAc...) asparagine glycan. D109 (charge relay system) is an active-site residue. N153 carries N-linked (GlcNAc...) asparagine glycosylation. Catalysis depends on S201, which acts as the Charge relay system.

Belongs to the peptidase S1 family. Snake venom subfamily. Monomer. In terms of tissue distribution, expressed by the venom gland.

The protein resides in the secreted. Functionally, snake venom serine protease that selectively cleaves the heavy chain of protein C (PROC). This activation is thrombomodulin-independent. The sequence is that of Protein C activator from Agkistrodon piscivorus leucostoma (Western cottonmouth).